The primary structure comprises 384 residues: BarH-like 2 homeobox protein (384 aa).

3 disordered regions span residues 1 to 134 (MTAM…APRT), 154 to 235 (CAPY…ARTA), and 364 to 384 (PGGQ…PHPR). Composition is skewed to low complexity over residues 101–110 (VPAQSLQPSP) and 119–134 (QSAA…APRT). Positions 157 to 175 (YSTSVSSPHHTPKQESNAA) are enriched in polar residues. The segment covering 177-217 (ESFRPKLEQEDGKTKLDKREDPQSDIKCHGTKEEGDREITS) has biased composition (basic and acidic residues). Residues 229 to 288 (PRKARTAFSDHQLNQLERSFERQKYLSVQDRMDLAAALNLTDTQVKTWYQNRRTKWKRQT) constitute a DNA-binding region (homeobox).

The protein belongs to the BAR homeobox family.

It is found in the nucleus. In terms of biological role, potential regulator of neural basic helix-loop-helix genes. It may down-regulate expression of ASCL1 and, within the thalamus, up-regulate NGN2, thereby regulating distinct patterns of neuronal differentiation. The protein is BarH-like 2 homeobox protein (Barhl2) of Mus musculus (Mouse).